A 130-amino-acid chain; its full sequence is Cytochrome b-c1 complex subunit 7 (130 aa).

The protein belongs to the UQCRB/QCR7 family. Component of the ubiquinol-cytochrome c oxidoreductase (cytochrome b-c1 complex, complex III, CIII), a multisubunit enzyme composed of 3 respiratory subunits cytochrome b, cytochrome c1 and Rieske protein, 2 core protein subunits, and additional low-molecular weight protein subunits. The complex exists as an obligatory dimer and forms supercomplexes (SCs) in the inner mitochondrial membrane with cytochrome c oxidase (complex IV, CIV).

It localises to the mitochondrion inner membrane. Functionally, component of the ubiquinol-cytochrome c oxidoreductase, a multisubunit transmembrane complex that is part of the mitochondrial electron transport chain which drives oxidative phosphorylation. The respiratory chain contains 3 multisubunit complexes succinate dehydrogenase (complex II, CII), ubiquinol-cytochrome c oxidoreductase (cytochrome b-c1 complex, complex III, CIII) and cytochrome c oxidase (complex IV, CIV), that cooperate to transfer electrons derived from NADH and succinate to molecular oxygen, creating an electrochemical gradient over the inner membrane that drives transmembrane transport and the ATP synthase. The cytochrome b-c1 complex catalyzes electron transfer from ubiquinol to cytochrome c, linking this redox reaction to translocation of protons across the mitochondrial inner membrane, with protons being carried across the membrane as hydrogens on the quinol. In the process called Q cycle, 2 protons are consumed from the matrix, 4 protons are released into the intermembrane space and 2 electrons are passed to cytochrome c. This chain is Cytochrome b-c1 complex subunit 7 (UBCRBP), found in Echinococcus multilocularis (Fox tapeworm).